The following is an 852-amino-acid chain: Leucine--tRNA ligase (852 aa).

The 'HIGH' region signature appears at 42 to 52 (PYPSGKLHMGH). The segment at 586 to 606 (NKYVPADQVDPNDPKDPETGE) is disordered. The short motif at 614–618 (KMSKS) is the 'KMSKS' region element. Position 617 (K617) interacts with ATP.

It belongs to the class-I aminoacyl-tRNA synthetase family.

The protein localises to the cytoplasm. It carries out the reaction tRNA(Leu) + L-leucine + ATP = L-leucyl-tRNA(Leu) + AMP + diphosphate. This is Leucine--tRNA ligase from Picosynechococcus sp. (strain ATCC 27264 / PCC 7002 / PR-6) (Agmenellum quadruplicatum).